A 438-amino-acid polypeptide reads, in one-letter code: ATP synthase subunit alpha, chloroplastic (438 aa).

Position 170-177 (170-177 (GDRQTGKT)) interacts with ATP.

Belongs to the ATPase alpha/beta chains family. In terms of assembly, F-type ATPases have 2 components, CF(1) - the catalytic core - and CF(0) - the membrane proton channel. CF(1) has five subunits: alpha(3), beta(3), gamma(1), delta(1), epsilon(1). CF(0) has four main subunits: a, b, b' and c.

Its subcellular location is the plastid. It is found in the chloroplast thylakoid membrane. It carries out the reaction ATP + H2O + 4 H(+)(in) = ADP + phosphate + 5 H(+)(out). Its function is as follows. Produces ATP from ADP in the presence of a proton gradient across the membrane. The alpha chain is a regulatory subunit. The chain is ATP synthase subunit alpha, chloroplastic from Ochrosphaera neapolitana.